The chain runs to 942 residues: Calcium-activated chloride channel regulator 2 (942 aa).

The N-terminal stretch at 1–32 (MTHRDSTGPVIGLKLVTLLFTLSPELLFLGAG) is a signal peptide. The Extracellular segment spans residues 33 to 905 (LKLKENGYDG…SRDDLILKGV (873 aa)). A metalloprotease domain region spans residues 54-205 (DLKLITNIKE…CSSDITGVFV (152 aa)). 2 N-linked (GlcNAc...) asparagine glycosylation sites follow: Asn74 and Asn97. His164 is a binding site for Zn(2+). Glu165 is an active-site residue. Zn(2+) contacts are provided by His168 and Asp175. N-linked (GlcNAc...) asparagine glycans are attached at residues Asn231, Asn235, Asn254, and Asn286. One can recognise a VWFA domain in the interval 311–483 (VVCLVIDVSR…NGMTEAFVRI (173 aa)). N-linked (GlcNAc...) asparagine glycans are attached at residues Asn522, Asn580, Asn637, and Asn821. Residues 906-926 (LTTVGLIAILCLIMVVAHCIF) traverse the membrane as a helical segment. Residues 927-942 (NRKKRPSRKENETKFL) lie on the Cytoplasmic side of the membrane.

This sequence belongs to the CLCR family. In terms of processing, the translation product is autoproteolytically cleaved by the metalloprotease domain in the endoplasmic reticulum into a N-terminal and a C-terminal products that remain physically associated with each other. The cleavage is necessary for calcium-activated chloride channel (CaCC) activation activity. N-glycosylated. As to expression, highly expressed in eye, spleen, lung, kidney, uterus, and endothelial cells. Weakly expressed in heart and throughout the gastrointestinal tract. Highly expressed in mammary cell lines. Its expression in immortalized cell line HC11 correlates with slow or arrested growth. Re-expression in mammary tumor cells reduces colony survival.

It localises to the cell membrane. It is found in the basal cell membrane. The protein localises to the cell junction. Functionally, plays a role in modulating chloride current across the plasma membrane in a calcium-dependent manner, and cell adhesion. Involved in basal cell adhesion and/or stratification of squamous epithelia. May act as a tumor suppressor in breast and colorectal cancer. Plays a key role for cell adhesion in the beginning stages of lung metastasis via the binding to ITGB4. The polypeptide is Calcium-activated chloride channel regulator 2 (Clca2) (Mus musculus (Mouse)).